Consider the following 360-residue polypeptide: Vomilenine reductase (360 aa).

The Enoyl reductase (ER) domain occupies 23 to 351 (GLLSPFNFSR…KADVKYRFVI (329 aa)). A Zn(2+)-binding site is contributed by Cys50. Residue Ser52 participates in an alcohol binding. Ser52 serves as a coordination point for NADP(+). Zn(2+)-binding residues include Asp53, His72, Glu73, Cys103, Cys106, Cys109, Cys117, and Cys166. His72 lines the an alcohol pocket. Residues Leu192, Gly194, Leu195, Ser214, Thr215, Ser216, Lys219, Lys220, Val277, Ala279, Ser301, and Arg348 each contribute to the NADP(+) site.

Belongs to the zinc-containing alcohol dehydrogenase family. Class-P subfamily. Homodimer. The cofactor is Zn(2+). Confined to roots.

The protein resides in the cytoplasm. It carries out the reaction (2R)-1,2-dihydrovomilenine + NADP(+) = vomilenine + NADPH + H(+). The protein operates within alkaloid biosynthesis; ajmaline biosynthesis. Its activity is regulated as follows. Inhibited by EDTA and p-hydroxymercuribenzoate, a sulfhydryl reagent. Alcohol dehydrogenase involved in the biosynthesis of ajmaline-type monoterpenoid indole alkaloids (MIAs) natural products, important plant-derived pharmaceuticals used in the therapy of heart disorders. Catalyzes the conversion of vomilenine to 1,2-dihydrovomilenine, an intermediate chemical in the biosynthesis of ajmaline. In Rauvolfia serpentina (Serpentine wood), this protein is Vomilenine reductase.